The sequence spans 303 residues: Pseudouridine-5'-phosphate glycosidase (303 aa).

Residue E25 is the Proton donor of the active site. Positions 87 and 107 each coordinate substrate. A Mn(2+)-binding site is contributed by D139. Residue 141-143 participates in substrate binding; the sequence is SAD. Residue K160 is the Nucleophile of the active site.

This sequence belongs to the pseudouridine-5'-phosphate glycosidase family. In terms of assembly, homotrimer. Mn(2+) serves as cofactor.

The enzyme catalyses D-ribose 5-phosphate + uracil = psi-UMP + H2O. Functionally, catalyzes the reversible cleavage of pseudouridine 5'-phosphate (PsiMP) to ribose 5-phosphate and uracil. Functions biologically in the cleavage direction, as part of a pseudouridine degradation pathway. The polypeptide is Pseudouridine-5'-phosphate glycosidase (Hahella chejuensis (strain KCTC 2396)).